The sequence spans 377 residues: SH2/SH3 adapter protein Nck1 (377 aa).

N-acetylalanine is present on Ala-2. The SH3 1 domain occupies 2–61 (AEEVVVVAKFDYVAQQEQELDIKKNERLWLLDDSKSWWRVRNSMNKTGFVPSNYVERKNS). Phosphoserine is present on residues Ser-85, Ser-91, and Ser-96. Position 105 is a phosphotyrosine (Tyr-105). One can recognise an SH3 2 domain in the interval 106-165 (DLNMPAFVKFNYMAEREDELSLIKGTKVIVMEKCSDGWWRGSYNGQIGWFPSNYVTEEGD). Ser-166 carries the phosphoserine modification. An SH3 3 domain is found at 190–252 (QVLHVVQALY…PKNYVTIMQN (63 aa)). The SH2 domain occupies 282–376 (WYYGKVTRHQ…GEKLYLVKHL (95 aa)).

In terms of assembly, interacts (via SH2 domain and SH3 domain 2) with EGFR. Interacts with PAK1 and SOS1. Interacts (via SH3 domains) with PKN2. Associates with BLNK, PLCG1, VAV1 and NCK1 in a B-cell antigen receptor-dependent fashion. Interacts with SOCS7. This interaction is required for nuclear import. Part of a complex containing PPP1R15B, PP1 and NCK1. Interacts with RALGPS1. Interacts with CAV2 (tyrosine phosphorylated form). Interacts with ADAM15. Interacts with FASLG. Directly interacts with RASA1. Interacts with isoform 4 of MINK1. Interacts with FLT1 (tyrosine phosphorylated). Interacts with KDR (tyrosine phosphorylated). Interacts (via SH2 domain) with EPHB1; activates the JUN cascade to regulate cell adhesion. Interacts with EPHA2. Interacts (via SH2 domain) with PDGFRB (tyrosine phosphorylated). Interacts with the inactive form of EIF2AK2/PKR. Interacts with PTPN1. Interacts with INSR/insulin receptor (in response to insulin stimulation); this interaction may mediate PTPN1 recruitment leading to INSR dephosphorylation. Interacts with CD3E (via Proline-rich sequence); the interaction is ligand dependent but independent of tyrosine kinase activation. Interacts with EGFR. Interacts with IRS1. Post-translationally, phosphorylated on Ser and Tyr residues. Phosphorylated in response to activation of EGFR and FcERI. Phosphorylated by activated PDGFRB.

It localises to the cytoplasm. Its subcellular location is the endoplasmic reticulum. The protein resides in the nucleus. Adapter protein which associates with tyrosine-phosphorylated growth factor receptors, such as KDR and PDGFRB, or their cellular substrates. Maintains low levels of EIF2S1 phosphorylation by promoting its dephosphorylation by PP1. Plays a role in the DNA damage response, not in the detection of the damage by ATM/ATR, but for efficient activation of downstream effectors, such as that of CHEK2. Plays a role in ELK1-dependent transcriptional activation in response to activated Ras signaling. Modulates the activation of EIF2AK2/PKR by dsRNA. May play a role in cell adhesion and migration through interaction with ephrin receptors. Also acts as an adpater protein for the T cell receptor complex (TCR-CD3E). Upon ligand engagement, is recruited by CD3E and promotes maturation of the immune synapse and T cell activation. In Mus musculus (Mouse), this protein is SH2/SH3 adapter protein Nck1 (Nck1).